The primary structure comprises 265 residues: MAGHTTADYISHHLTFLTTGQGFWNVHLDTLFFSLVSGVLFLFFFYRIASKATSGVPGKFQCLVEMLVEWVDGVVKDNIHGSDVRHQIGSLALTIFCWVFIMNAIDLIPVDFPPQFAELLGIHYLRAVPTADISATLGMSVCVFALIIFYTIKSKGLGGFVKEYTLHPFNHWAFIPVNFLLEAVTLLAKPISLAFRLFGNMYAGELIFVLIAVMYMADNIIPQVLGIPLHLIWAIFHILVITLQAFIFMMLTVVYLSIAYNKSDH.

The next 6 helical transmembrane spans lie at 26-46 (VHLD…FFFY), 88-108 (IGSL…IDLI), 132-152 (DISA…FYTI), 168-188 (PFNH…TLLA), 195-217 (FRLF…MYMA), and 231-251 (LIWA…FMML).

Belongs to the ATPase A chain family. In terms of assembly, F-type ATPases have 2 components, CF(1) - the catalytic core - and CF(0) - the membrane proton channel. CF(1) has five subunits: alpha(3), beta(3), gamma(1), delta(1), epsilon(1). CF(0) has three main subunits: a(1), b(2) and c(9-12). The alpha and beta chains form an alternating ring which encloses part of the gamma chain. CF(1) is attached to CF(0) by a central stalk formed by the gamma and epsilon chains, while a peripheral stalk is formed by the delta and b chains.

It is found in the cell inner membrane. Its function is as follows. Key component of the proton channel; it plays a direct role in the translocation of protons across the membrane. In Histophilus somni (strain 2336) (Haemophilus somnus), this protein is ATP synthase subunit a.